Here is a 175-residue protein sequence, read N- to C-terminus: Small ribosomal subunit protein bS16 (175 aa).

This sequence belongs to the bacterial ribosomal protein bS16 family.

The chain is Small ribosomal subunit protein bS16 from Cytophaga hutchinsonii (strain ATCC 33406 / DSM 1761 / CIP 103989 / NBRC 15051 / NCIMB 9469 / D465).